The sequence spans 206 residues: Large ribosomal subunit protein mL40 (206 aa).

Residues 1 to 46 (MTASVLRSISLALRPTSGLLGTWQTQLRETHQRASLLSFWELIPMR) constitute a mitochondrion transit peptide. The tract at residues 168–192 (LFPFEKEGPHYTPPIPNYQPPEGRY) is disordered.

The protein belongs to the mitochondrion-specific ribosomal protein mL40 family. In terms of assembly, component of the mitochondrial large ribosomal subunit (mt-LSU). Mature mammalian 55S mitochondrial ribosomes consist of a small (28S) and a large (39S) subunit. The 28S small subunit contains a 12S ribosomal RNA (12S mt-rRNA) and 30 different proteins. The 39S large subunit contains a 16S rRNA (16S mt-rRNA), a copy of mitochondrial valine transfer RNA (mt-tRNA(Val)), which plays an integral structural role, and 52 different proteins. mL40 binds to the major groove of the anticodon stem of mt-tRNA(Val) in the central protuberance. As to expression, ubiquitous.

It is found in the mitochondrion. In Homo sapiens (Human), this protein is Large ribosomal subunit protein mL40 (MRPL40).